We begin with the raw amino-acid sequence, 764 residues long: Complement factor B (764 aa).

The signal sequence occupies residues 1 to 25 (MGSNLSPQLCLMPFILGLLSGGVTT). Sushi domains follow at residues 35-100 (GSCS…ECRA), 101-160 (IHCP…ICDN), and 163-220 (GYCS…SCQD). Intrachain disulfides connect Cys37–Cys76, Cys62–Cys98, Cys103–Cys145, Cys131–Cys158, Cys165–Cys205, and Cys191–Cys218. 2 N-linked (GlcNAc...) asparagine glycosylation sites follow: Asn122 and Asn142. In terms of domain architecture, VWFA spans 270-469 (NIYLVLDGSD…NLEDVFYQMI (200 aa)). The Mg(2+) site is built by Ser278 and Ser280. Residue Asn285 is glycosylated (N-linked (GlcNAc...) asparagine). Thr353 lines the Mg(2+) pocket. N-linked (GlcNAc...) asparagine glycosylation occurs at Asn378. Residues 477-757 (LCGMVWEHRK…VLPWLKEKLQ (281 aa)) form the Peptidase S1 domain. Cystine bridges form between Cys478/Cys596, Cys511/Cys527, Cys599/Cys615, Cys656/Cys682, and Cys695/Cys725. Active-site charge relay system residues include His526 and Asp576. Ser699 serves as the catalytic Charge relay system.

Belongs to the peptidase S1 family. As to quaternary structure, monomer. Interacts with complement C3b; this interaction is dependent on the presence of Mg(2+). Catalytic component of the C3 convertase of the alternative complement pathway, also named C3bBb, composed of complement factor B Bb and complement C3b. Catalytic component of the C5 convertase of the alternative complement pathway, also named C3bBb3b, composed of complement factor B Bb and additional molecules of complement C3b. Interacts to CFP; this interaction contributes to the stabilization of the active C3-convertase enzyme complex. Mg(2+) is required as a cofactor. Requires Mn(2+) as cofactor. In terms of processing, cleaved by CFD following activation of the alternative complement system, generating Ba and Bb chains. Cleavage and activation takes place when CFB is already associated with complement C3b.

It is found in the secreted. The protein resides in the cell surface. The catalysed reaction is Cleavage of Arg-|-Ser bond in complement component C3 alpha-chain to yield C3a and C3b, and Arg-|-Xaa bond in complement component C5 alpha-chain to yield C5a and C5b.. Its function is as follows. Precursor of the catalytic component of the C3 and C5 convertase complexes of the alternative pathway of the complement system, a cascade of proteins that leads to phagocytosis and breakdown of pathogens and signaling that strengthens the adaptive immune system. The alternative complement pathway acts as an amplification loop that enhances other complement pathways (classical, lectin and GZMK) by promoting formation of additional C3 and C5 convertases. CFB is cleaved and activated by CFD to generate Ba and Bb chains; Bb chain constituting the catalytic component of the C3 and C5 convertases. In terms of biological role, serine protease component of the complement C3 and C5 convertase complexes of the alternative complement pathway. Following cleavage and activation by factor D (CFD), forms the C3 convertase together with complement C3b. As part of the C3 convertase, cleaves and activates C3 into C3a anaphylatoxin and C3b opsonin, the next components of the complement pathways. When an additional complement C3b molecule binds to the C3 convertase, forms the C5 convertase, which cleaves and activates C5 into C5a anaphylatoxin and C5b component of the membrane attack complex. Involved in proliferation and differentiation of preactivated B-lymphocytes, rapid spreading of peripheral blood monocytes, stimulation of lymphocyte blastogenesis and lysis of erythrocytes. The protein is Complement factor B (CFB) of Gorilla gorilla gorilla (Western lowland gorilla).